The chain runs to 535 residues: Cytochrome P450 monooxygenase claP (535 aa).

Transmembrane regions (helical) follow at residues 7 to 27 (IGTL…KLVG) and 225 to 245 (YFSM…KLPT). C472 serves as a coordination point for heme.

Belongs to the cytochrome P450 family. It depends on heme as a cofactor.

It localises to the membrane. Its pathway is secondary metabolite biosynthesis; terpenoid biosynthesis. Cytochrome P450 monooxygenase; part of the gene cluster that mediates the biosynthesis of clavilactone A, a meroterpenoid that features a unique benzo-fused ten-membered carbocyclic ring unit with an alpha,beta-epoxy-gamma-lactone moiety, forming an intriguing 10/5/3 tricyclic nested skeleton. Cytochrome P450 monooxygenases claO, claP, claQ, claU, and claW are close orthologs, suggesting that a redundant function or pseudogenes are present in the cla cluster. These monoxygenases are not involved in clavilactone A biosynthesis nor its modification. ClaR, ClaS and ClaT are sufficient to produce clavilactone A. The biosynthesis begins with the prenyltransferase claS that transfers geranyl pyrophosphate (GPP) to hydroquinone to produces geranylhydroquinone. The cytochrome P450 monooxygenase claR then catalyzes the diradical coupling reaction between the intramolecular hydroquinone and allyl moieties to form the benzo-fused ten-membered carbocyclic ring unit of wigantol. Finally the cytochrome P450 monooxygenase claT exquisitely and stereoselectively assembles the alpha,beta-epoxy-gamma-lactone moiety, producing clavilactone A via arnebinol A. The sequence is that of Cytochrome P450 monooxygenase claP from Ampulloclitocybe clavipes (Club foot).